The chain runs to 638 residues: MPDIKLPDGSIRSYEQAVTVAEVAASIGAGLARAALAGKIGGQLVDTSYLIEQNADLAIITERDAEGLELIRHSTAHLLAYAVKELFPEAQVTIGPVIENGFYYDFAYKRPFTPEDLVAIEKRMAELAKKDIPVSREVWARDDAVKFFLDLGEKYKAELIGAIPADQQVSLYREGDFIDLCRGPHVPTTAKLKVFKLMKVAGAYWRGDHRNEQLQRIYGTAWAKKEDLDAYLHMLEEAEKRDHRRLGKQYDLFHMQDEAPGLVFWHPKGWAIWQEIEGYMRAVYRNNGYQEVRCPQILDKSLWEKSGHWEHYKDNMFTTSSENRDYAVKPMNCPGHVQVFNAGLRSYRELPLRYGEFGSCHRNEPAGALHGLMRVRGFVQDDGHIFCTEDQIESEVTAFNALVKKVYADFGFNDVAVKLALRPDSRVGADDVWDRAEDALRQGLRASGLEWTELPGEGAFYGPKIEFHIRDAIGRSWQCGTMQVDFSMPGRLGAEYVGADDTRKVPVMLHRAILGSLERFIGILIENFAGALPLWLAPVQVVVLNISEKQADYAAEVAQKLHSAGFRAEADLRNEKITYKIREHSLNRLPYQLVVGDKEKADGLVAVRTRGGQDLGQMPVDVLIKRLQEEVVARSGTA.

The region spanning 1-61 is the TGS domain; it reads MPDIKLPDGS…EQNADLAIIT (61 aa). A catalytic region spans residues 242-533; sequence DHRRLGKQYD…LIENFAGALP (292 aa). 3 residues coordinate Zn(2+): C333, H384, and H510.

This sequence belongs to the class-II aminoacyl-tRNA synthetase family. As to quaternary structure, homodimer. The cofactor is Zn(2+).

It is found in the cytoplasm. The enzyme catalyses tRNA(Thr) + L-threonine + ATP = L-threonyl-tRNA(Thr) + AMP + diphosphate + H(+). Functionally, catalyzes the attachment of threonine to tRNA(Thr) in a two-step reaction: L-threonine is first activated by ATP to form Thr-AMP and then transferred to the acceptor end of tRNA(Thr). Also edits incorrectly charged L-seryl-tRNA(Thr). This is Threonine--tRNA ligase from Dechloromonas aromatica (strain RCB).